The sequence spans 422 residues: Zinc finger protein Gfi-1 (422 aa).

Positions 1 to 20 are SNAG domain; sequence MPRSFLVKSKKAHSYHQPRS. Residues 1–109 form a disordered region; it reads MPRSFLVKSK…ASEKSMCPSL (109 aa). Residues S20 and S56 each carry the phosphoserine modification. A required for interaction with RELA region spans residues 140-257; that stretch reads RPCGALERGA…LLLGGGSYKC (118 aa). 6 C2H2-type zinc fingers span residues 255–278, 284–306, 312–334, 340–362, 368–390, and 396–419; these read YKCIKCSKVFSTPHGLEVHVRRSH, FACEMCGKTFGHAVSLEQHKAVH, FDCKICGKSFKRSSTLSTHLLIH, YPCQYCGKRFHQKSDMKKHTFIH, HKCQVCGKAFSQSSNLITHSRKH, and FGCDLCGKGFQRKVDLRRHRETQH.

In terms of assembly, interacts with U2AF1L4. Component of RCOR-GFI-KDM1A-HDAC complexes. Interacts directly with RCOR1, KDM1A and HDAC2. Also interacts with HDAC1. Interacts (via the zinc-finger domain) with ARIH2; the interaction prevents GFI1 ubiquitination and proteasomal degradation. Interacts with PIAS3; the interaction relieves the inhibitory effect of PIAS3 on STAT3-mediated transcriptional activity. Forms a complex with EHMT2 and HDAC1 to promote 'Lys-9' dimethylation of H3 (H3K9Me2) and repress expression of target genes. Interacts directly with EHMT2. Component of the GFI1-AJUBA-HDAC1 repressor complex. Interacts directly with AJUBA (via ITS LIM domains); the interaction results in the HDAC-dependent corepression of a subset of GFI1 target genes and, occurs independently of the SNAG domain. Interacts with SPI1; the interaction inhibits SPI1 transcriptional activity targeted at macrophage-specific genes, repressing macrophage differentiation of myeloid progenitor cells and promoting granulocyte commitment. Interacts with RUNX1T1; the interaction represses HDAC-mediated transcriptional activity. Interacts with RELA; the interaction occurs on liposaccharide (LPS) stimulation and controls RELA DNA binding activity and regulates endotoxin-mediated TOLL-like receptor inflammatory response. Interacts (via the C-terminal zinc fingers) with ZBTB17; the interaction results in the recruitment of GFI1 to the CDKN1A/p21 and CDKN1B promoters and repression of transcription. In terms of processing, ubiquitinated. Ubiquitination and degradation by the proteasome is inhibited by the ubiquitin ligase, ARIH2.

Its subcellular location is the nucleus. In terms of biological role, transcription repressor essential for hematopoiesis. Functions in a cell-context and development-specific manner. Binds to 5'-TAAATCAC[AT]GCA-3' in the promoter region of a large number of genes. Component of several complexes, including the EHMT2-GFI1-HDAC1, AJUBA-GFI1-HDAC1 and RCOR-GFI-KDM1A-HDAC complexes, that suppress, via histone deacetylase (HDAC) recruitment, a number of genes implicated in multilineage blood cell development. Regulates neutrophil differentiation, promotes proliferation of lymphoid cells, and is required for granulocyte development. Inhibits SPI1 transcriptional activity at macrophage-specific genes, repressing macrophage differentiation of myeloid progenitor cells and promoting granulocyte commitment. Mediates, together with U2AF1L4, the alternative splicing of CD45 and controls T-cell receptor signaling. Regulates the endotoxin-mediated Toll-like receptor (TLR) inflammatory response by antagonizing RELA. Cooperates with CBFA2T2 to regulate ITGB1-dependent neurite growth. Controls cell-cycle progression by repressing CDKNIA/p21 transcription in response to TGFB1 via recruitment of GFI1 by ZBTB17 to the CDKNIA/p21 and CDKNIB promoters. Required for the maintenance of inner ear hair cells. In addition to its role in transcription, acts as a substrate adapter for PRMT1 in the DNA damage response: facilitates the recognition of TP53BP1 and MRE11 substrates by PRMT1, promoting their methylation and the DNA damage response. This chain is Zinc finger protein Gfi-1 (GFI1), found in Homo sapiens (Human).